The following is a 203-amino-acid chain: Endo-type membrane-bound lytic murein transglycosylase A (203 aa).

The N-terminal stretch at 1–15 is a signal peptide; the sequence is MKLRWFAFLVVLLAG. Cysteine 16 carries N-palmitoyl cysteine lipidation. A lipid anchor (S-diacylglycerol cysteine) is attached at cysteine 16.

This sequence belongs to the transglycosylase Slt family.

It is found in the cell outer membrane. It carries out the reaction Endolytic cleavage of the (1-&gt;4)-beta-glycosidic linkage between N-acetylmuramic acid (MurNAc) and N-acetylglucosamine (GlcNAc) residues in peptidoglycan with concomitant formation of a 1,6-anhydrobond in the MurNAc residue.. Its function is as follows. Murein-degrading enzyme. May play a role in recycling of muropeptides during cell elongation and/or cell division. Preferentially cleaves at a distance of more than two disaccharide units from the ends of the glycan chain. The chain is Endo-type membrane-bound lytic murein transglycosylase A from Escherichia fergusonii (strain ATCC 35469 / DSM 13698 / CCUG 18766 / IAM 14443 / JCM 21226 / LMG 7866 / NBRC 102419 / NCTC 12128 / CDC 0568-73).